The following is a 332-amino-acid chain: Anthranilate phosphoribosyltransferase (332 aa).

5-phospho-alpha-D-ribose 1-diphosphate contacts are provided by residues G79, 82-83 (GD), S87, 89-92 (NIST), 107-115 (KHGNRSVSS), and S119. G79 is an anthranilate binding site. S91 serves as a coordination point for Mg(2+). Anthranilate is bound at residue N110. Position 165 (R165) interacts with anthranilate. Positions 223 and 224 each coordinate Mg(2+).

The protein belongs to the anthranilate phosphoribosyltransferase family. Homodimer. Mg(2+) serves as cofactor.

It catalyses the reaction N-(5-phospho-beta-D-ribosyl)anthranilate + diphosphate = 5-phospho-alpha-D-ribose 1-diphosphate + anthranilate. It participates in amino-acid biosynthesis; L-tryptophan biosynthesis; L-tryptophan from chorismate: step 2/5. Catalyzes the transfer of the phosphoribosyl group of 5-phosphorylribose-1-pyrophosphate (PRPP) to anthranilate to yield N-(5'-phosphoribosyl)-anthranilate (PRA). This is Anthranilate phosphoribosyltransferase from Yersinia pseudotuberculosis serotype O:3 (strain YPIII).